We begin with the raw amino-acid sequence, 263 residues long: Endonuclease 8 (263 aa).

Residue Pro2 is the Schiff-base intermediate with DNA of the active site. Glu3 serves as the catalytic Proton donor. Lys53 functions as the Proton donor; for beta-elimination activity in the catalytic mechanism. Positions 70, 125, and 169 each coordinate DNA. An FPG-type zinc finger spans residues 229–263; that stretch reads KVFHRDGEACERCGGIIEKTTLSSRPFYWCAHCQK. Arg253 (proton donor; for delta-elimination activity) is an active-site residue.

It belongs to the FPG family. Requires Zn(2+) as cofactor.

The catalysed reaction is 2'-deoxyribonucleotide-(2'-deoxyribose 5'-phosphate)-2'-deoxyribonucleotide-DNA = a 3'-end 2'-deoxyribonucleotide-(2,3-dehydro-2,3-deoxyribose 5'-phosphate)-DNA + a 5'-end 5'-phospho-2'-deoxyribonucleoside-DNA + H(+). Functionally, involved in base excision repair of DNA damaged by oxidation or by mutagenic agents. Acts as a DNA glycosylase that recognizes and removes damaged bases. Has a preference for oxidized pyrimidines, such as thymine glycol, 5,6-dihydrouracil and 5,6-dihydrothymine. Has AP (apurinic/apyrimidinic) lyase activity and introduces nicks in the DNA strand. Cleaves the DNA backbone by beta-delta elimination to generate a single-strand break at the site of the removed base with both 3'- and 5'-phosphates. The polypeptide is Endonuclease 8 (Salmonella typhi).